We begin with the raw amino-acid sequence, 228 residues long: Ion-translocating oxidoreductase complex subunit E (228 aa).

5 consecutive transmembrane segments (helical) span residues A18–A38, I69–A89, F92–V112, L125–L145, and P182–V202.

Belongs to the NqrDE/RnfAE family. The complex is composed of six subunits: RnfA, RnfB, RnfC, RnfD, RnfE and RnfG.

The protein resides in the cell inner membrane. Its function is as follows. Part of a membrane-bound complex that couples electron transfer with translocation of ions across the membrane. The polypeptide is Ion-translocating oxidoreductase complex subunit E (Cronobacter sakazakii (strain ATCC BAA-894) (Enterobacter sakazakii)).